Here is a 147-residue protein sequence, read N- to C-terminus: Hemoglobin subunit beta (147 aa).

Val-2 carries the N-acetylvaline modification. A Globin domain is found at 3 to 147 (HLTPEEKNAV…VANALAHKYH (145 aa)). Thr-13 is subject to Phosphothreonine. At Ser-45 the chain carries Phosphoserine. At Lys-60 the chain carries N6-acetyllysine. His-64 serves as a coordination point for heme b. Lys-83 carries the post-translational modification N6-acetyllysine. His-93 contacts heme b. Cys-94 bears the S-nitrosocysteine mark. An N6-acetyllysine modification is found at Lys-145.

This sequence belongs to the globin family. In terms of assembly, heterotetramer of two alpha chains and two beta chains. Red blood cells.

In terms of biological role, involved in oxygen transport from the lung to the various peripheral tissues. The sequence is that of Hemoglobin subunit beta (HBB) from Macaca fascicularis (Crab-eating macaque).